The primary structure comprises 147 residues: MAIAEITEKLLAAKKAKGISFEDLEKIVGCDETWIASVIYRQASASTEEAEKIVTALGLPAELAEPLTVPPMKGSLEPVIPTDPLVYRFYEIMQVYGVPVKAVIHEKFGDGIMSAIDFSIEVDKVPDPKGDRVQVTMCGKFLPYKKW.

Active-site residues include Arg88, Glu91, and Ser114.

This sequence belongs to the cyanase family.

It carries out the reaction cyanate + hydrogencarbonate + 3 H(+) = NH4(+) + 2 CO2. Catalyzes the reaction of cyanate with bicarbonate to produce ammonia and carbon dioxide. The protein is Cyanate hydratase of Acaryochloris marina (strain MBIC 11017).